A 345-amino-acid polypeptide reads, in one-letter code: Large ribosomal subunit protein uL4 (345 aa).

An N-acetylalanine modification is found at alanine 2.

This sequence belongs to the universal ribosomal protein uL4 family.

This chain is Large ribosomal subunit protein uL4 (rpl-4), found in Caenorhabditis elegans.